The chain runs to 95 residues: UPF0473 protein GWCH70_2487 (95 aa).

Belongs to the UPF0473 family.

The chain is UPF0473 protein GWCH70_2487 from Geobacillus sp. (strain WCH70).